We begin with the raw amino-acid sequence, 612 residues long: Arginine--tRNA ligase (612 aa).

The 'HIGH' region motif lies at 152 to 162 (PNIAKEMHVGH).

It belongs to the class-I aminoacyl-tRNA synthetase family. As to quaternary structure, monomer.

The protein resides in the cytoplasm. The catalysed reaction is tRNA(Arg) + L-arginine + ATP = L-arginyl-tRNA(Arg) + AMP + diphosphate. The polypeptide is Arginine--tRNA ligase (Prochlorococcus marinus (strain MIT 9313)).